Reading from the N-terminus, the 1323-residue chain is ABC transporter C family member 12 (1323 aa).

The region spanning 110–396 (HCISLFFYSI…LPILIALGIQ (287 aa)) is the ABC transmembrane type-1 1 domain. 6 helical membrane-spanning segments follow: residues 111-131 (CISLFFYSIYVGSQFVGPEIL), 152-172 (MGYYYALIMFGTAMIGSFCNY), 227-247 (VFGILNNGLFALPQIIICLAL), 252-272 (IGWPTFVGLGLMLAAIPFNGL), 338-358 (ILIAMIGAIPTAASILVFSTY), and 375-395 (SYLNLLKIPLGFLPILIALGI). In terms of domain architecture, ABC transporter 1 spans 428-652 (VYMKNSTTTW…KLEFASLLQE (225 aa)). 464 to 471 (GSVGSGKS) is a binding site for ATP. Positions 657–695 (ENTKGDDSDDDDDKKDDDKKEEKVEKPKQSDKDGTLISE) are disordered. Basic and acidic residues predominate over residues 672–690 (DDDKKEEKVEKPKQSDKDG). The next 5 helical transmembrane spans lie at 712-732 (VTAGGGLLFLFAMILFLLETG), 772-792 (IYIGVGMASIIVTVVRTFSFF), 840-860 (LIATSIAQFFTLMLSVLATLI), 862-882 (ISIIVPWLLIPLAPICILFFI), and 952-972 (WLGLRLDFLGNLIVFFSCIFI). Residues 720-1010 (FLFAMILFLL…GVLQAADTET (291 aa)) enclose the ABC transmembrane type-1 2 domain. The 235-residue stretch at 1047–1281 (IKFDNLVMRY…QNGLLTWLVN (235 aa)) folds into the ABC transporter 2 domain. 1081 to 1088 (GRTGAGKS) lines the ATP pocket.

It belongs to the ABC transporter superfamily. ABCC family. Conjugate transporter (TC 3.A.1.208) subfamily.

It is found in the membrane. This is ABC transporter C family member 12 (abcC12) from Dictyostelium discoideum (Social amoeba).